The sequence spans 188 residues: Interferon alpha-2 (188 aa).

Positions 1–23 (MALTFALLVALLVLSCKSSCSVG) are cleaved as a signal peptide. Cystine bridges form between cysteine 24-cysteine 121 and cysteine 52-cysteine 161. The O-linked (GalNAc...) threonine glycan is linked to threonine 129.

Belongs to the alpha/beta interferon family. In terms of assembly, interacts with IFNAR2.

It localises to the secreted. Produced by macrophages, IFN-alpha have antiviral activities. The protein is Interferon alpha-2 (IFNA2) of Homo sapiens (Human).